A 570-amino-acid polypeptide reads, in one-letter code: Proline--tRNA ligase (570 aa).

This sequence belongs to the class-II aminoacyl-tRNA synthetase family. ProS type 1 subfamily. In terms of assembly, homodimer.

The protein localises to the cytoplasm. It carries out the reaction tRNA(Pro) + L-proline + ATP = L-prolyl-tRNA(Pro) + AMP + diphosphate. Its function is as follows. Catalyzes the attachment of proline to tRNA(Pro) in a two-step reaction: proline is first activated by ATP to form Pro-AMP and then transferred to the acceptor end of tRNA(Pro). As ProRS can inadvertently accommodate and process non-cognate amino acids such as alanine and cysteine, to avoid such errors it has two additional distinct editing activities against alanine. One activity is designated as 'pretransfer' editing and involves the tRNA(Pro)-independent hydrolysis of activated Ala-AMP. The other activity is designated 'posttransfer' editing and involves deacylation of mischarged Ala-tRNA(Pro). The misacylated Cys-tRNA(Pro) is not edited by ProRS. This is Proline--tRNA ligase from Clostridium beijerinckii (strain ATCC 51743 / NCIMB 8052) (Clostridium acetobutylicum).